We begin with the raw amino-acid sequence, 741 residues long: G2 and S phase-expressed protein 1 (741 aa).

Position 73 is a phosphoserine (S73). 3 disordered regions span residues 101–120 (EVAQ…ETFV), 131–428 (EKEQ…KTVS), and 450–512 (FKVP…STRR). Polar residues predominate over residues 106–120 (ATPQNPVNQGKETFV). The span at 131-147 (EKEQKRDRSPMSLKRET) shows a compositional bias: basic and acidic residues. Phosphoserine occurs at positions 139, 153, 191, and 245. A compositionally biased stretch (polar residues) spans 173-209 (SPVSAGPAQTQSNQGLPCSSQPLPRESSTSQPPSQAG). The span at 246–261 (IQRTKLVNEKGSQSDV) shows a compositional bias: polar residues. Over residues 310 to 321 (SSTSGSASSLES) the composition is skewed to low complexity. Residue S311 is modified to Phosphoserine. The segment covering 337–355 (QRSSIPASGSQRRTSTSKS) has biased composition (polar residues). The span at 360–372 (PAASRQALPAAPA) shows a compositional bias: low complexity. Over residues 398-408 (SPLTQQPQTPE) the composition is skewed to polar residues. S460 is modified (phosphoserine). A Phosphothreonine modification is found at T465. A phosphoserine mark is found at S476, S493, S509, and S514. Low complexity predominate over residues 478–497 (TPASRVVSSTPVRRSSGTTP). T518 bears the Phosphothreonine mark. Residues S521, S541, S582, and S599 each carry the phosphoserine modification. The disordered stretch occupies residues 550-640 (LSSEPRRRST…VHGGGCSHTP (91 aa)). The span at 578-593 (QGLSSDESSSPPSSVP) shows a compositional bias: low complexity. T696 bears the Phosphothreonine mark. Residues S720, S726, and S736 each carry the phosphoserine modification.

Phosphorylated in mitosis.

Its subcellular location is the cytoplasm. The protein localises to the cytoskeleton. Its function is as follows. May be involved in p53-induced cell cycle arrest in G2/M phase by interfering with microtubule rearrangements that are required to enter mitosis. Overexpression delays G2/M phase progression. The polypeptide is G2 and S phase-expressed protein 1 (Gtse1) (Mus musculus (Mouse)).